A 217-amino-acid polypeptide reads, in one-letter code: UPF0502 protein KPK_3478 (217 aa).

The protein belongs to the UPF0502 family.

In Klebsiella pneumoniae (strain 342), this protein is UPF0502 protein KPK_3478.